The chain runs to 620 residues: 1-deoxy-D-xylulose-5-phosphate synthase (620 aa).

Thiamine diphosphate contacts are provided by residues histidine 80 and 121 to 123 (GHS). Residue aspartate 152 participates in Mg(2+) binding. Residues 153-154 (GA), asparagine 181, tyrosine 288, and glutamate 370 contribute to the thiamine diphosphate site. Asparagine 181 contacts Mg(2+).

The protein belongs to the transketolase family. DXPS subfamily. Homodimer. Mg(2+) is required as a cofactor. It depends on thiamine diphosphate as a cofactor.

It catalyses the reaction D-glyceraldehyde 3-phosphate + pyruvate + H(+) = 1-deoxy-D-xylulose 5-phosphate + CO2. It participates in metabolic intermediate biosynthesis; 1-deoxy-D-xylulose 5-phosphate biosynthesis; 1-deoxy-D-xylulose 5-phosphate from D-glyceraldehyde 3-phosphate and pyruvate: step 1/1. Functionally, catalyzes the acyloin condensation reaction between C atoms 2 and 3 of pyruvate and glyceraldehyde 3-phosphate to yield 1-deoxy-D-xylulose-5-phosphate (DXP). This chain is 1-deoxy-D-xylulose-5-phosphate synthase, found in Salmonella arizonae (strain ATCC BAA-731 / CDC346-86 / RSK2980).